Reading from the N-terminus, the 78-residue chain is Large ribosomal subunit protein bL28 (78 aa).

The segment at 1-31 (MAAHCQVTGAEPGFGHSISHSHRRNKRRFDP) is disordered.

Belongs to the bacterial ribosomal protein bL28 family.

This chain is Large ribosomal subunit protein bL28, found in Pseudarthrobacter chlorophenolicus (strain ATCC 700700 / DSM 12829 / CIP 107037 / JCM 12360 / KCTC 9906 / NCIMB 13794 / A6) (Arthrobacter chlorophenolicus).